A 784-amino-acid chain; its full sequence is Cadherin-5 (784 aa).

Residues 1–25 form the signal peptide; the sequence is MQRLMMLLATSGACLGLLAVAAVAA. A propeptide spanning residues 26–47 is cleaved from the precursor; it reads AGANPAQRDTHSLLPTHRRQKR. Cadherin domains follow at residues 48–151, 152–258, 259–372, 373–477, and 478–593; these read DWIW…WPVF, THRL…FPFF, TQTK…PPIF, QQPF…DNAP, and EFAK…MAAQ. Topologically, residues 48–599 are extracellular; that stretch reads DWIWNQMHID…MAAQVGVSIQ (552 aa). Residues glutamate 58 and glutamate 59 each coordinate Ca(2+). An N-linked (GlcNAc...) (complex) asparagine glycan is attached at asparagine 61. Residues aspartate 109 and glutamate 111 each coordinate Ca(2+). N-linked (GlcNAc...) (complex) asparagine glycosylation is present at asparagine 112. Positions 143, 144, 145, 146, and 147 each coordinate Ca(2+). N-linked (GlcNAc...) asparagine glycosylation is present at asparagine 157. The Ca(2+) site is built by aspartate 177, aspartate 179, histidine 186, and aspartate 231. N-linked (GlcNAc...) asparagine glycosylation is present at asparagine 362. Asparagine 442 carries N-linked (GlcNAc...) (complex) asparagine glycosylation. Residues asparagine 523 and asparagine 535 are each glycosylated (N-linked (GlcNAc...) asparagine). A helical membrane pass occupies residues 600-620; that stretch reads AVVAILLCILTITVITLLIFL. A required for interaction with PALS1 region spans residues 621-660; it reads RRRLRKQARAHGKSVPEIHEQLVTYDEEGGGEMDTTSYDV. The Cytoplasmic segment spans residues 621-784; it reads RRRLRKQARA…GSDPREELLY (164 aa).

In terms of assembly, part of a complex composed of AMOTL2, MAGI1 and CDH5, within the complex AMOTL2 acts as a scaffold protein for the interaction of MAGI1 with CDH5. The complex is required for coupling actin fibers to cell junctions in endothelial cells. Within the complex AMOTL2 (via its N-terminus) interacts with CDH5. Interacts (via cadherin 5 domain) with PTPRB. Interacts with TRPC4. Interacts with KRIT1. Interacts with PARD3. Interacts with RTN4 (isoform B). Interacts with PALS1; the interaction promotes PALS1 localization to cell junctions and is required for CDH5-mediated vascular lumen formation and endothelial cell. Interacts with CTNND1/p120-catenin; the interaction controls CADH5 endocytosis. Phosphorylated on tyrosine residues by KDR/VEGFR-2. Dephosphorylated by PTPRB. Post-translationally, O-glycosylated. In terms of tissue distribution, expressed in endothelial cells (at protein level). Expressed in the brain.

It localises to the cell junction. The protein resides in the adherens junction. It is found in the cell membrane. The protein localises to the cytoplasm. Its function is as follows. Cadherins are calcium-dependent cell adhesion proteins. They preferentially interact with themselves in a homophilic manner in connecting cells; cadherins may thus contribute to the sorting of heterogeneous cell types. This cadherin may play a important role in endothelial cell biology through control of the cohesion and organization of the intercellular junctions. It associates with alpha-catenin forming a link to the cytoskeleton. Plays a role in coupling actin fibers to cell junctions in endothelial cells, via acting as a cell junctional complex anchor for AMOTL2 and MAGI1. Acts in concert with KRIT1 and PALS1 to establish and maintain correct endothelial cell polarity and vascular lumen. These effects are mediated by recruitment and activation of the Par polarity complex and RAP1B. Required for activation of PRKCZ and for the localization of phosphorylated PRKCZ, PARD3, TIAM1 and RAP1B to the cell junction. Associates with CTNND1/p120-catenin to control CADH5 endocytosis. This chain is Cadherin-5, found in Homo sapiens (Human).